The primary structure comprises 270 residues: Tryptophan synthase alpha chain (270 aa).

Active-site proton acceptor residues include Glu-49 and Asp-60.

This sequence belongs to the TrpA family. Tetramer of two alpha and two beta chains.

It catalyses the reaction (1S,2R)-1-C-(indol-3-yl)glycerol 3-phosphate + L-serine = D-glyceraldehyde 3-phosphate + L-tryptophan + H2O. The protein operates within amino-acid biosynthesis; L-tryptophan biosynthesis; L-tryptophan from chorismate: step 5/5. In terms of biological role, the alpha subunit is responsible for the aldol cleavage of indoleglycerol phosphate to indole and glyceraldehyde 3-phosphate. The sequence is that of Tryptophan synthase alpha chain from Pseudomonas fluorescens (strain ATCC BAA-477 / NRRL B-23932 / Pf-5).